Reading from the N-terminus, the 84-residue chain is Putative UPF0320 protein YAL068W-A (84 aa).

Belongs to the UPF0320 family.

This is Putative UPF0320 protein YAL068W-A from Saccharomyces cerevisiae (strain ATCC 204508 / S288c) (Baker's yeast).